The primary structure comprises 121 residues: Large ribosomal subunit protein bL12 (121 aa).

The protein belongs to the bacterial ribosomal protein bL12 family. In terms of assembly, homodimer. Part of the ribosomal stalk of the 50S ribosomal subunit. Forms a multimeric L10(L12)X complex, where L10 forms an elongated spine to which 2 to 4 L12 dimers bind in a sequential fashion. Binds GTP-bound translation factors.

Its function is as follows. Forms part of the ribosomal stalk which helps the ribosome interact with GTP-bound translation factors. Is thus essential for accurate translation. In Bacillus pumilus (strain SAFR-032), this protein is Large ribosomal subunit protein bL12.